Reading from the N-terminus, the 231-residue chain is Ureidoacrylate amidohydrolase RutB (231 aa).

The active-site Proton acceptor is Asp25. Lys134 is a catalytic residue. Cys167 acts as the Nucleophile in catalysis.

It belongs to the isochorismatase family. RutB subfamily.

The catalysed reaction is (Z)-3-ureidoacrylate + H2O + H(+) = (Z)-3-aminoacrylate + NH4(+) + CO2. It carries out the reaction (Z)-3-ureidoacrylate + H2O = (Z)-3-aminoacrylate + carbamate + H(+). It catalyses the reaction (Z)-2-methylureidoacrylate + H2O + H(+) = (Z)-2-methylaminoacrylate + NH4(+) + CO2. Hydrolyzes ureidoacrylate to form aminoacrylate and carbamate. The carbamate hydrolyzes spontaneously, thereby releasing one of the nitrogen atoms of the pyrimidine ring as ammonia and one of its carbon atoms as CO2. The sequence is that of Ureidoacrylate amidohydrolase RutB from Escherichia coli O157:H7 (strain EC4115 / EHEC).